Reading from the N-terminus, the 221-residue chain is Type 3 secretion system stator protein (221 aa).

The protein belongs to the SctL stator family. As to quaternary structure, the core secretion machinery of the T3SS is composed of approximately 20 different proteins, including cytoplasmic components, a base, an export apparatus and a needle. This subunit is part of the cytosolic complex. Interacts directly with YscN/SctN (T3SS ATPase) and YscQ/SctQ (the major sorting platform component).

It is found in the cytoplasm. Its function is as follows. Component of the type III secretion system (T3SS), also called injectisome, which is used to inject bacterial effector proteins into eukaryotic host cells. Acts as a regulator of the YscN/SctN ATPase activity. The chain is Type 3 secretion system stator protein from Yersinia pestis.